A 310-amino-acid polypeptide reads, in one-letter code: Ribosomal RNA small subunit methyltransferase H (310 aa).

Residues 33 to 35, D52, F79, D98, and Q105 contribute to the S-adenosyl-L-methionine site; that span reads GGH.

The protein belongs to the methyltransferase superfamily. RsmH family.

It is found in the cytoplasm. It carries out the reaction cytidine(1402) in 16S rRNA + S-adenosyl-L-methionine = N(4)-methylcytidine(1402) in 16S rRNA + S-adenosyl-L-homocysteine + H(+). In terms of biological role, specifically methylates the N4 position of cytidine in position 1402 (C1402) of 16S rRNA. The polypeptide is Ribosomal RNA small subunit methyltransferase H (Campylobacter jejuni subsp. jejuni serotype O:6 (strain 81116 / NCTC 11828)).